An 86-amino-acid chain; its full sequence is MNSKIFAVLLLLAFLSCVLSDQYCPKSSITACKKMNIRNDCCKDDDCTGGSWCCATPCGNFCKYPTDRPGGKRAAGGKSCKTGYVY.

Residues 1–20 (MNSKIFAVLLLLAFLSCVLS) form the signal peptide. The WAP domain occupies 21–66 (DQYCPKSSITACKKMNIRNDCCKDDDCTGGSWCCATPCGNFCKYPT). Intrachain disulfides connect Cys24/Cys54, Cys32/Cys58, Cys41/Cys53, Cys42/Cys80, and Cys47/Cys62.

This sequence belongs to the venom protein 11 family. 01 (wap-1) subfamily. In terms of processing, contains 5 disulfide bonds. As to expression, expressed by the venom gland.

It is found in the secreted. In terms of biological role, has antibacterial activity. This Lycosa singoriensis (Wolf spider) protein is U15-lycotoxin-Ls1d.